The following is a 120-amino-acid chain: Small ribosomal subunit protein bS16 (120 aa).

The disordered stretch occupies residues 80 to 120 (GLKKRPARNNPHKGEPGKKAQERIAAAKQAAEDAKAAEASA). A compositionally biased stretch (basic residues) spans 81-90 (LKKRPARNNP). Composition is skewed to basic and acidic residues over residues 91–101 (HKGEPGKKAQE) and 109–120 (AAEDAKAAEASA).

This sequence belongs to the bacterial ribosomal protein bS16 family.

The polypeptide is Small ribosomal subunit protein bS16 (Bartonella bacilliformis (strain ATCC 35685 / KC583 / Herrer 020/F12,63)).